The sequence spans 683 residues: Putative boron transporter 5 (683 aa).

Over 1-38 (MEEERVEGSKRPFQGIIRDVKGRALCYKQDWIAGLRSG) the chain is Cytoplasmic. Residues 39–59 (FGILAPTTYVFFASALPVIAF) traverse the membrane as a helical segment. At 60 to 80 (GEQLSHDTERSLSTVETLAST) the chain is on the extracellular side. The helical transmembrane segment at 81-101 (ALCGVIHSLLGGQPLLILGVA) threads the bilayer. At 102-126 (EPTVLMYKYLYDFAKGRPELGKQLY) the chain is on the cytoplasmic side. The helical transmembrane segment at 127–147 (LAWVAWVCVWTALLLFLMAIF) threads the bilayer. Residues 148–158 (NMAYIINRFTR) are Extracellular-facing. Residues 159–179 (IAGELFGMLIAVLFLQQTIKG) form a helical membrane-spanning segment. At 180–200 (MVSEFRIPKGEDSKLEKYQFE) the chain is on the cytoplasmic side. Residues 201–221 (WLYTNGLLGLIFTVGLVYTAL) traverse the membrane as a helical segment. Residues 222–238 (KSRKARSWPYGTGCCRS) lie on the Extracellular side of the membrane. A helical transmembrane segment spans residues 239-259 (FVADYGVPLMVVVWTALSFST). Residues 260-294 (PSKLPSGVPRRLVSPLPWDSVSLTHWTVIKDMGKV) are Cytoplasmic-facing. The chain crosses the membrane as a helical span at residues 295 to 315 (SPGYIFAAFIPALMIAGLYFF). At 316 to 335 (DHSVVSQLAQQKEFNLKNPS) the chain is on the extracellular side. A helical transmembrane segment spans residues 336–356 (AYHYDILLLGFMVLICGMLGL). At 357-477 (PPSNGVLPQS…EQRVSNLLQS (121 aa)) the chain is on the cytoplasmic side. The chain crosses the membrane as a helical span at residues 478-498 (LLVIGAVFALPVIKLIPTSLL). Residues 499–565 (WGYFAYMAID…QILYFGLCYG (67 aa)) lie on the Extracellular side of the membrane. A helical membrane pass occupies residues 566-586 (VTWIPVAGIMFPVLFFLLVAI). The Cytoplasmic portion of the chain corresponds to 587–683 (RQYLLPKLFK…GDGDMSSSRE (97 aa)).

It belongs to the anion exchanger (TC 2.A.31.3) family.

The protein localises to the membrane. Functionally, putative boron transporter. Boron is essential for maintaining the integrity of plants cell walls. In Arabidopsis thaliana (Mouse-ear cress), this protein is Putative boron transporter 5 (BOR5).